A 558-amino-acid chain; its full sequence is Urease subunit alpha 2 (558 aa).

The Urease domain maps to 129-558 (GAVDTHVHLL…SVSLNRLYFL (430 aa)). Ni(2+) is bound by residues histidine 134, histidine 136, and lysine 214. Lysine 214 carries the N6-carboxylysine modification. Histidine 216 is a substrate binding site. Ni(2+) is bound by residues histidine 243 and histidine 269. Histidine 317 acts as the Proton donor in catalysis. Aspartate 357 provides a ligand contact to Ni(2+).

This sequence belongs to the metallo-dependent hydrolases superfamily. Urease alpha subunit family. In terms of assembly, may form a heterohexamer of 3 UreC (alpha) and 3 UreAB (gamma/beta) subunits. May also form a heterotrimer of UreA (gamma), UreB (beta) and UreC (alpha) subunits. Three heterotrimers associate to form the active enzyme. Ni cation serves as cofactor. In terms of processing, carboxylation allows a single lysine to coordinate two nickel ions.

The protein resides in the cytoplasm. It carries out the reaction urea + 2 H2O + H(+) = hydrogencarbonate + 2 NH4(+). It participates in nitrogen metabolism; urea degradation; CO(2) and NH(3) from urea (urease route): step 1/1. The protein is Urease subunit alpha 2 of Streptomyces coelicolor (strain ATCC BAA-471 / A3(2) / M145).